A 545-amino-acid polypeptide reads, in one-letter code: SLAIN motif-containing protein 1 (545 aa).

Residues Thr-14–Cys-53 adopt a coiled-coil conformation. 2 stretches are compositionally biased toward low complexity: residues Thr-268–Ser-286 and Ile-466–Pro-481. Disordered regions lie at residues Thr-268–Cys-342 and Gln-461–Pro-526. The segment covering Ser-503–Phe-522 has biased composition (polar residues).

The protein belongs to the SLAIN motif-containing family.

Its subcellular location is the cytoplasm. It localises to the cytoskeleton. In terms of biological role, microtubule plus-end tracking protein that might be involved in the regulation of cytoplasmic microtubule dynamics, microtubule organization and microtubule elongation. The sequence is that of SLAIN motif-containing protein 1 (slain1) from Xenopus tropicalis (Western clawed frog).